The chain runs to 301 residues: Nucleotide-binding protein ELI_02120 (301 aa).

12–19 is a binding site for ATP; that stretch reads GMSGAGKS. Position 62-65 (62-65) interacts with GTP; that stretch reads DSRT.

It belongs to the RapZ-like family.

In terms of biological role, displays ATPase and GTPase activities. The protein is Nucleotide-binding protein ELI_02120 of Erythrobacter litoralis (strain HTCC2594).